The chain runs to 121 residues: Dihydroneopterin aldolase (121 aa).

Residues Glu22, Tyr54, and 73–74 (IE) each bind substrate. Lys100 functions as the Proton donor/acceptor in the catalytic mechanism.

This sequence belongs to the DHNA family. Homooctamer. Four molecules assemble into a ring, and two rings come together to give a cylinder with a hole of at least 13 a diameter.

The catalysed reaction is 7,8-dihydroneopterin = 6-hydroxymethyl-7,8-dihydropterin + glycolaldehyde. It carries out the reaction 7,8-dihydroneopterin = 7,8-dihydromonapterin. Its pathway is cofactor biosynthesis; tetrahydrofolate biosynthesis; 2-amino-4-hydroxy-6-hydroxymethyl-7,8-dihydropteridine diphosphate from 7,8-dihydroneopterin triphosphate: step 3/4. Its function is as follows. Catalyzes the conversion of 7,8-dihydroneopterin to 6-hydroxymethyl-7,8-dihydropterin. Can also catalyze the epimerization of carbon 2' of dihydroneopterin to dihydromonapterin. In Staphylococcus epidermidis (strain ATCC 35984 / DSM 28319 / BCRC 17069 / CCUG 31568 / BM 3577 / RP62A), this protein is Dihydroneopterin aldolase (folB).